The chain runs to 248 residues: Cyclo(L-leucyl-L-leucyl) synthase (248 aa).

S37 functions as the Nucleophile in the catalytic mechanism. Substrate-binding positions include N40, 180 to 184, Y204, and 209 to 210; these read YVIAE and KL.

It belongs to the CDPS family. Monomer.

It carries out the reaction 2 L-leucyl-tRNA(Leu) = cyclo(L-leucyl-L-leucyl) + 2 tRNA(Leu) + 2 H(+). Involved in the biosynthesis of pulcherrimin, a red extracellular pigment. It uses activated amino acids in the form of aminoacyl-tRNAs (aa-tRNAs) as substrates to catalyze the ATP-independent formation of cyclodipeptides which are intermediates in diketopiperazine (DKP) biosynthetic pathways. Catalyzes the formation of cyclo(L-Leu-L-Leu) (cLL) from L-leucyl-tRNA(Leu). Can also incorporate various nonpolar residues, such as L-phenylalanine, L-leucine and methionine, into cyclodipeptides. The protein is Cyclo(L-leucyl-L-leucyl) synthase (yvmC) of Bacillus subtilis (strain 168).